The chain runs to 359 residues: Large ribosomal subunit protein uL3 (359 aa).

The disordered stretch occupies residues 336 to 359 (VRPPAKRPPAEAPQITYISRESKQ).

Belongs to the universal ribosomal protein uL3 family. In terms of assembly, part of the 50S ribosomal subunit. Forms a cluster with proteins L14 and L24e.

Its function is as follows. One of the primary rRNA binding proteins, it binds directly near the 3'-end of the 23S rRNA, where it nucleates assembly of the 50S subunit. The polypeptide is Large ribosomal subunit protein uL3 (Thermococcus sibiricus (strain DSM 12597 / MM 739)).